The following is a 335-amino-acid chain: Holliday junction branch migration complex subunit RuvB (335 aa).

A large ATPase domain (RuvB-L) region spans residues 4 to 184; that stretch reads ADRLIQPTAL…FGIVQRLEFY (181 aa). ATP is bound by residues isoleucine 23, arginine 24, glycine 65, lysine 68, threonine 69, threonine 70, 131–133, arginine 174, tyrosine 184, and arginine 221; that span reads EDY. Residue threonine 69 coordinates Mg(2+). Residues 185 to 255 form a small ATPAse domain (RuvB-S) region; the sequence is NIKDLTQIVK…VASAALDMLD (71 aa). Positions 258 to 335 are head domain (RuvB-H); the sequence is KEGFDYMDRK…LHFGYDYEPN (78 aa). Residues arginine 294, arginine 313, and arginine 318 each contribute to the DNA site.

Belongs to the RuvB family. In terms of assembly, homohexamer. Forms an RuvA(8)-RuvB(12)-Holliday junction (HJ) complex. HJ DNA is sandwiched between 2 RuvA tetramers; dsDNA enters through RuvA and exits via RuvB. An RuvB hexamer assembles on each DNA strand where it exits the tetramer. Each RuvB hexamer is contacted by two RuvA subunits (via domain III) on 2 adjacent RuvB subunits; this complex drives branch migration. In the full resolvosome a probable DNA-RuvA(4)-RuvB(12)-RuvC(2) complex forms which resolves the HJ.

The protein localises to the cytoplasm. The catalysed reaction is ATP + H2O = ADP + phosphate + H(+). Functionally, the RuvA-RuvB-RuvC complex processes Holliday junction (HJ) DNA during genetic recombination and DNA repair, while the RuvA-RuvB complex plays an important role in the rescue of blocked DNA replication forks via replication fork reversal (RFR). RuvA specifically binds to HJ cruciform DNA, conferring on it an open structure. The RuvB hexamer acts as an ATP-dependent pump, pulling dsDNA into and through the RuvAB complex. RuvB forms 2 homohexamers on either side of HJ DNA bound by 1 or 2 RuvA tetramers; 4 subunits per hexamer contact DNA at a time. Coordinated motions by a converter formed by DNA-disengaged RuvB subunits stimulates ATP hydrolysis and nucleotide exchange. Immobilization of the converter enables RuvB to convert the ATP-contained energy into a lever motion, pulling 2 nucleotides of DNA out of the RuvA tetramer per ATP hydrolyzed, thus driving DNA branch migration. The RuvB motors rotate together with the DNA substrate, which together with the progressing nucleotide cycle form the mechanistic basis for DNA recombination by continuous HJ branch migration. Branch migration allows RuvC to scan DNA until it finds its consensus sequence, where it cleaves and resolves cruciform DNA. The chain is Holliday junction branch migration complex subunit RuvB from Pseudoalteromonas atlantica (strain T6c / ATCC BAA-1087).